A 214-amino-acid chain; its full sequence is Adenylate kinase (214 aa).

Gly-14 to Thr-19 contacts ATP. The segment at Ser-34–Val-63 is NMP. Residues Ser-35, Arg-40, Leu-61–Val-63, Gly-89–Arg-92, and Gln-96 contribute to the AMP site. The segment at Ser-130–Asp-163 is LID. Arg-131 serves as a coordination point for ATP. Zn(2+) is bound by residues Cys-134 and Cys-137. ATP is bound at residue Val-140 to Tyr-141. Positions 150 and 153 each coordinate Zn(2+). AMP contacts are provided by Arg-160 and Arg-171. Residue Thr-199 coordinates ATP.

This sequence belongs to the adenylate kinase family. In terms of assembly, monomer.

It localises to the cytoplasm. It catalyses the reaction AMP + ATP = 2 ADP. Its pathway is purine metabolism; AMP biosynthesis via salvage pathway; AMP from ADP: step 1/1. Functionally, catalyzes the reversible transfer of the terminal phosphate group between ATP and AMP. Plays an important role in cellular energy homeostasis and in adenine nucleotide metabolism. The protein is Adenylate kinase of Chlamydia caviae (strain ATCC VR-813 / DSM 19441 / 03DC25 / GPIC) (Chlamydophila caviae).